The primary structure comprises 328 residues: Glyoxylate reductase/hydroxypyruvate reductase (328 aa).

S36 is modified (phosphoserine). A substrate-binding site is contributed by 83–84; it reads VG. NADP(+) contacts are provided by residues 162–164, 185–188, S217, and I243; these read GRI and RQPR. Substrate-binding positions include R245, D269, and 293–296; that span reads HIGS. H293 serves as the catalytic Proton donor. G295 contributes to the NADP(+) binding site. T298 carries the phosphothreonine modification.

The protein belongs to the D-isomer specific 2-hydroxyacid dehydrogenase family. As to quaternary structure, homodimer.

The catalysed reaction is glycolate + NADP(+) = glyoxylate + NADPH + H(+). It catalyses the reaction (R)-glycerate + NAD(+) = 3-hydroxypyruvate + NADH + H(+). It carries out the reaction (R)-glycerate + NADP(+) = 3-hydroxypyruvate + NADPH + H(+). Functionally, enzyme with hydroxy-pyruvate reductase, glyoxylate reductase and D-glycerate dehydrogenase enzymatic activities. Reduces hydroxypyruvate to D-glycerate, glyoxylate to glycolate oxidizes D-glycerate to hydroxypyruvate. This Mus musculus (Mouse) protein is Glyoxylate reductase/hydroxypyruvate reductase (Grhpr).